Here is a 500-residue protein sequence, read N- to C-terminus: Aspartyl/glutamyl-tRNA(Asn/Gln) amidotransferase subunit B (500 aa).

The protein belongs to the GatB/GatE family. GatB subfamily. Heterotrimer of A, B and C subunits.

The enzyme catalyses L-glutamyl-tRNA(Gln) + L-glutamine + ATP + H2O = L-glutaminyl-tRNA(Gln) + L-glutamate + ADP + phosphate + H(+). The catalysed reaction is L-aspartyl-tRNA(Asn) + L-glutamine + ATP + H2O = L-asparaginyl-tRNA(Asn) + L-glutamate + ADP + phosphate + 2 H(+). Its function is as follows. Allows the formation of correctly charged Asn-tRNA(Asn) or Gln-tRNA(Gln) through the transamidation of misacylated Asp-tRNA(Asn) or Glu-tRNA(Gln) in organisms which lack either or both of asparaginyl-tRNA or glutaminyl-tRNA synthetases. The reaction takes place in the presence of glutamine and ATP through an activated phospho-Asp-tRNA(Asn) or phospho-Glu-tRNA(Gln). This is Aspartyl/glutamyl-tRNA(Asn/Gln) amidotransferase subunit B from Sinorhizobium medicae (strain WSM419) (Ensifer medicae).